Reading from the N-terminus, the 638-residue chain is Voltage-gated potassium channel KCNC2 (638 aa).

Residues Met1–Arg229 lie on the Cytoplasmic side of the membrane. Residues Leu47 to Ser75 form a disordered region. Over residues Pro56–Pro72 the composition is skewed to pro residues. His124, Cys130, Cys151, and Cys152 together coordinate Zn(2+). A helical transmembrane segment spans residues Phe230–Leu248. Residues Asn259 and Asn266 are each glycosylated (N-linked (GlcNAc...) asparagine). Residues Tyr284–Phe303 traverse the membrane as a helical segment. Residues Ser304–Leu314 lie on the Cytoplasmic side of the membrane. The chain crosses the membrane as a helical span at residues Leu315 to Ser337. Residues Phe346–Leu368 traverse the membrane as a helical; Voltage-sensor segment. Topologically, residues Arg369 to Glu381 are cytoplasmic. A helical membrane pass occupies residues Phe382–Tyr401. Residues Thr437, Leu438, Gly439, and Tyr440 each coordinate K(+). Residues Thr437 to Asp442 carry the Selectivity filter motif. A helical transmembrane segment spans residues Met451–Val473. Topologically, residues Asn474–Leu638 are cytoplasmic. Residues Ser538 to Gly572 are disordered. Position 564 is a phosphoserine; by PKA (Ser564). Ser600 carries the post-translational modification Phosphoserine.

This sequence belongs to the potassium channel family. C (Shaw) (TC 1.A.1.2) subfamily. Kv3.2/KCNC2 sub-subfamily. Homotetramer and heterotetramer with other channel-forming alpha subunits, such as KCNC1. Interacts with KCNC1. Homotetramer or heterotetramer channel activity is regulated by association with modulating ancillary subunits such as KCNE1, KCNE2 and KCNE3, creating a functionally diverse range of channel complexes. Interacts with KCNE1, KCNE2 and KCNE3. Post-translationally, phosphorylated by PKA in cortical synaptosomes. cAMP-dependent phosphorylation inhibits channel activity. Histamine H2 receptor- and PKA-induced phosphorylation extends action potential spike duration, reduces action potential spike amplitude, sustains maximum firing frequency in hippocampal interneurons; also reduces the incidence of high-frequency oscillations in hippocampal CA3 pyramidal cell layers. In terms of tissue distribution, expressed in neurons of the visual cortex during postnatal development. Expressed in neurons of the globus pallidus at postnatal age day 7 (P7), onward. Expressed in thalamic relay neurons. Expressed in neurons in layer IV and deeper cortical layers of the neocortex. Expressed in hippocampal interneurons. Expressed in nonpyramidal interneurons in the basolateral amygdala. Expressed in retinal ganglion cells (at protein level). Widely expressed in the brain. Expressed in numerous thalamic relay neurons throughout the dorsal thalamus. Expressed in interneurons of the deep layers V-VI of the cerebral cortex, the CA1 and CA3 pyramidal and dentate gyrus (DG) granule cells of the hippocampus, in neurons of the caudate-putamen, globus pallidus and subthalamic nucleus. Also expressed in the optic layer of interior colliculus, the inferior colliculus, the red nucleus, the medial geniculate, the ventral lateral lemiscus, the reticulotegmental nucleus and in the deep cerebellar nuclei. Expressed in globus pallidus (GP) neurons.

It localises to the cell membrane. It is found in the membrane. The protein resides in the perikaryon. The protein localises to the cell projection. Its subcellular location is the axon. It localises to the synapse. It is found in the synaptosome. The protein resides in the dendrite. The protein localises to the postsynaptic cell membrane. Its subcellular location is the presynaptic cell membrane. It localises to the apical cell membrane. It is found in the basolateral cell membrane. It carries out the reaction K(+)(in) = K(+)(out). Inhibited by Stichodactyla helianthus peptide ShK. Inhibited by millimolar levels of tetraethylammonium (TEA). Contrary to other channels, inhibited only by millimolar levels of 4-aminopyridine (4-AP). Functionally, voltage-gated potassium channel that mediates transmembrane potassium transport in excitable membranes, primarily in the brain. Contributes to the regulation of the fast action potential repolarization and in sustained high-frequency firing in neurons of the central nervous system. Homotetramer channels mediate delayed-rectifier voltage-dependent potassium currents that activate rapidly at high-threshold voltages and inactivate slowly. Forms tetrameric channels through which potassium ions pass in accordance with their electrochemical gradient. The channel alternates between opened and closed conformations in response to the voltage difference across the membrane. Can form functional homotetrameric channels and heterotetrameric channels that contain variable proportions of KCNC1, and possibly other family members as well; channel properties depend on the type of alpha subunits that are part of the channel. Channel properties may be modulated either by the association with ancillary subunits, such as KCNE1, KCNE2 and KCNE3 or indirectly by nitric oxide (NO) through a cGMP- and PKG-mediated signaling cascade, slowing channel activation and deactivation of delayed rectifier potassium channels. Contributes to fire sustained trains of very brief action potentials at high frequency in retinal ganglion cells, thalamocortical and suprachiasmatic nucleus (SCN) neurons and in hippocampal and neocortical interneurons. Sustained maximal action potential firing frequency in inhibitory hippocampal interneurons is negatively modulated by histamine H2 receptor activation in a cAMP- and protein kinase (PKA) phosphorylation-dependent manner. Plays a role in maintaining the fidelity of synaptic transmission in neocortical GABAergic interneurons by generating action potential (AP) repolarization at nerve terminals, thus reducing spike-evoked calcium influx and GABA neurotransmitter release. Required for long-range synchronization of gamma oscillations over distance in the neocortex. Contributes to the modulation of the circadian rhythm of spontaneous action potential firing in suprachiasmatic nucleus (SCN) neurons in a light-dependent manner. The polypeptide is Voltage-gated potassium channel KCNC2 (Rattus norvegicus (Rat)).